The sequence spans 426 residues: Serine--tRNA ligase (426 aa).

229–231 (TAE) serves as a coordination point for L-serine. Residue 260-262 (RSE) coordinates ATP. Glu-283 provides a ligand contact to L-serine. 347–350 (EIAS) provides a ligand contact to ATP. Ser-383 is a binding site for L-serine.

The protein belongs to the class-II aminoacyl-tRNA synthetase family. Type-1 seryl-tRNA synthetase subfamily. As to quaternary structure, homodimer. The tRNA molecule binds across the dimer.

It localises to the cytoplasm. It carries out the reaction tRNA(Ser) + L-serine + ATP = L-seryl-tRNA(Ser) + AMP + diphosphate + H(+). The catalysed reaction is tRNA(Sec) + L-serine + ATP = L-seryl-tRNA(Sec) + AMP + diphosphate + H(+). Its pathway is aminoacyl-tRNA biosynthesis; selenocysteinyl-tRNA(Sec) biosynthesis; L-seryl-tRNA(Sec) from L-serine and tRNA(Sec): step 1/1. In terms of biological role, catalyzes the attachment of serine to tRNA(Ser). Is also able to aminoacylate tRNA(Sec) with serine, to form the misacylated tRNA L-seryl-tRNA(Sec), which will be further converted into selenocysteinyl-tRNA(Sec). The sequence is that of Serine--tRNA ligase from Rickettsia bellii (strain OSU 85-389).